The sequence spans 352 residues: S-adenosylmethionine:tRNA ribosyltransferase-isomerase (352 aa).

It belongs to the QueA family. Monomer.

Its subcellular location is the cytoplasm. The enzyme catalyses 7-aminomethyl-7-carbaguanosine(34) in tRNA + S-adenosyl-L-methionine = epoxyqueuosine(34) in tRNA + adenine + L-methionine + 2 H(+). The protein operates within tRNA modification; tRNA-queuosine biosynthesis. In terms of biological role, transfers and isomerizes the ribose moiety from AdoMet to the 7-aminomethyl group of 7-deazaguanine (preQ1-tRNA) to give epoxyqueuosine (oQ-tRNA). The chain is S-adenosylmethionine:tRNA ribosyltransferase-isomerase from Cupriavidus necator (strain ATCC 17699 / DSM 428 / KCTC 22496 / NCIMB 10442 / H16 / Stanier 337) (Ralstonia eutropha).